The following is a 122-amino-acid chain: Large ribosomal subunit protein uL14 (122 aa).

This sequence belongs to the universal ribosomal protein uL14 family. Part of the 50S ribosomal subunit. Forms a cluster with proteins L3 and L19. In the 70S ribosome, L14 and L19 interact and together make contacts with the 16S rRNA in bridges B5 and B8.

In terms of biological role, binds to 23S rRNA. Forms part of two intersubunit bridges in the 70S ribosome. In Chelativorans sp. (strain BNC1), this protein is Large ribosomal subunit protein uL14.